Reading from the N-terminus, the 129-residue chain is Phosphoribosyl-AMP cyclohydrolase (129 aa).

Position 76 (Asp76) interacts with Mg(2+). Cys77 provides a ligand contact to Zn(2+). Residues Asp78 and Asp80 each coordinate Mg(2+). Zn(2+)-binding residues include Cys97 and Cys104.

This sequence belongs to the PRA-CH family. Homodimer. Mg(2+) serves as cofactor. The cofactor is Zn(2+).

The protein localises to the cytoplasm. It carries out the reaction 1-(5-phospho-beta-D-ribosyl)-5'-AMP + H2O = 1-(5-phospho-beta-D-ribosyl)-5-[(5-phospho-beta-D-ribosylamino)methylideneamino]imidazole-4-carboxamide. It participates in amino-acid biosynthesis; L-histidine biosynthesis; L-histidine from 5-phospho-alpha-D-ribose 1-diphosphate: step 3/9. Catalyzes the hydrolysis of the adenine ring of phosphoribosyl-AMP. This chain is Phosphoribosyl-AMP cyclohydrolase, found in Polaromonas sp. (strain JS666 / ATCC BAA-500).